The sequence spans 261 residues: Dienlactone hydrolase 1 (261 aa).

Residues C147, D194, and H226 contribute to the active site.

Belongs to the dienelactone hydrolase family.

Its pathway is xenobiotic degradation. Its function is as follows. Dienlactone hydrolase; part of the Fusarium detoxification of benzoxazolinone cluster 1 (FDB1) involved in the degradation of benzoxazolinones produced by the host plant. Maize, wheat, and rye produce the 2 benzoxazinone phytoanticipins 2,4-dihy-droxy-7-methoxy-1,4-benzoxazin-3-one (DIMBOA) and 2,4-dihydroxy-1,4-benzoxazin-3-one (DIBOA) that, due to their inherent instability once released, spontaneously degrade to the more stable corresponding benzoxazolinones, 6-methoxy-2-benzoxazolinone (MBOA) and 2-benzoxazolinone (BOA), respectively. The first step in the detoxification of benzoxazolinones involves the hydrolysis of the cyclic ester bond of benzoxazolinones by the FDB1 cluster gamma-lactamase MBL1 to aminophenols. MBL1 is able to convert BOA into 2-aminophenol (2-AP), as well as MBOA into 5-methoxy-2-aminophenol (2-AMP). The FDB2 cluster N-malonyltransferase FDB2/NAT1 then metabolizes aminophenols via N-malonylation to non-toxic malonamic acids. FDB2/NAT1 converts 2-AP into N-(2-hydroxyphenyl) malonamic acid (HPMA) and 2-AMP into N-(2-hydroxy-4-methoxyphenyl) malonamic acid (HMPMA). The duplicated dienlactone hydrolases DLH1 and DLH2 may provide redundant function for hydrolyzing the lactone moiety in the BOA molecule. The roles of the amidases and other enzymes encoded by the 2 FDB clusters have not been identified so far. The protein is Dienlactone hydrolase 1 of Gibberella moniliformis (strain M3125 / FGSC 7600) (Maize ear and stalk rot fungus).